Here is a 110-residue protein sequence, read N- to C-terminus: uncharacterized protein (110 aa).

This sequence belongs to the HesB/IscA family.

This is an uncharacterized protein from Rickettsia prowazekii (strain Madrid E).